The sequence spans 131 residues: D-ribose pyranase (131 aa).

The Proton donor role is filled by H20. Residues D28, H98, and 120-122 (YSN) contribute to the substrate site.

This sequence belongs to the RbsD / FucU family. RbsD subfamily. In terms of assembly, homodecamer.

Its subcellular location is the cytoplasm. The enzyme catalyses beta-D-ribopyranose = beta-D-ribofuranose. Its pathway is carbohydrate metabolism; D-ribose degradation; D-ribose 5-phosphate from beta-D-ribopyranose: step 1/2. In terms of biological role, catalyzes the interconversion of beta-pyran and beta-furan forms of D-ribose. The sequence is that of D-ribose pyranase from Latilactobacillus sakei subsp. sakei (strain 23K) (Lactobacillus sakei subsp. sakei).